The primary structure comprises 310 residues: Coproporphyrin III ferrochelatase (310 aa).

Positions 184 and 265 each coordinate Fe(2+).

Belongs to the ferrochelatase family.

Its subcellular location is the cytoplasm. The catalysed reaction is Fe-coproporphyrin III + 2 H(+) = coproporphyrin III + Fe(2+). It participates in porphyrin-containing compound metabolism; protoheme biosynthesis. Involved in coproporphyrin-dependent heme b biosynthesis. Catalyzes the insertion of ferrous iron into coproporphyrin III to form Fe-coproporphyrin III. The chain is Coproporphyrin III ferrochelatase from Limosilactobacillus reuteri (strain DSM 20016) (Lactobacillus reuteri).